A 129-amino-acid polypeptide reads, in one-letter code: UPF0102 protein RD1_1191 (129 aa).

This sequence belongs to the UPF0102 family.

This is UPF0102 protein RD1_1191 from Roseobacter denitrificans (strain ATCC 33942 / OCh 114) (Erythrobacter sp. (strain OCh 114)).